The sequence spans 609 residues: Spore coat protein homolog 1 (609 aa).

The first 17 residues, 1-17 (MKSLLFVVFIFLTTTYA), serve as a signal peptide directing secretion. Asn82, Asn397, and Asn440 each carry an N-linked (GlcNAc...) asparagine glycan. Residues 527 to 547 (TVTQVPEAPGTDGTPSESTAW) are disordered. The GPI-anchor amidated serine moiety is linked to residue Ser584. The propeptide at 585–609 (SSSIKRTPCILPLVILASTLFASFF) is removed in mature form.

The protein localises to the cell membrane. May play a role in cell adhesion. This chain is Spore coat protein homolog 1, found in Rhizopus delemar (strain RA 99-880 / ATCC MYA-4621 / FGSC 9543 / NRRL 43880) (Mucormycosis agent).